A 365-amino-acid chain; its full sequence is Ribosomal RNA large subunit methyltransferase M (365 aa).

S-adenosyl-L-methionine contacts are provided by residues Ser-187, Cys-220–Gly-223, Asp-239, Asp-259, and Asp-276. Lys-305 serves as the catalytic Proton acceptor.

This sequence belongs to the class I-like SAM-binding methyltransferase superfamily. RNA methyltransferase RlmE family. RlmM subfamily. Monomer.

The protein resides in the cytoplasm. It catalyses the reaction cytidine(2498) in 23S rRNA + S-adenosyl-L-methionine = 2'-O-methylcytidine(2498) in 23S rRNA + S-adenosyl-L-homocysteine + H(+). In terms of biological role, catalyzes the 2'-O-methylation at nucleotide C2498 in 23S rRNA. The polypeptide is Ribosomal RNA large subunit methyltransferase M (Psychromonas ingrahamii (strain DSM 17664 / CCUG 51855 / 37)).